A 535-amino-acid polypeptide reads, in one-letter code: uncharacterized protein (535 aa).

The next 6 helical transmembrane spans lie at Leu63–Tyr83, Val90–Ile110, Val143–Gly163, Val168–Cys188, Ser226–Val246, and Val258–Trp278. An HAMP domain is found at Leu279 to Arg330. One can recognise a Guanylate cyclase domain in the interval Ala362–Cys486.

It belongs to the adenylyl cyclase class-3 family.

It is found in the cell membrane. This is an uncharacterized protein from Mycobacterium tuberculosis (strain ATCC 25618 / H37Rv).